The sequence spans 197 residues: Putative AgrB-like protein (197 aa).

Transmembrane regions (helical) follow at residues Phe-29 to Leu-49, Ser-79 to Ala-99, Tyr-102 to Tyr-122, and Ile-143 to Gly-163.

Belongs to the AgrB family.

The protein localises to the cell membrane. May be involved in the proteolytic processing of a quorum sensing system signal molecule precursor. This chain is Putative AgrB-like protein, found in Halalkalibacterium halodurans (strain ATCC BAA-125 / DSM 18197 / FERM 7344 / JCM 9153 / C-125) (Bacillus halodurans).